The chain runs to 653 residues: Threonine--tRNA ligase (653 aa).

The 61-residue stretch at 1–61 (MIKITFPDGN…NEDAEVKLFK (61 aa)) folds into the TGS domain. The segment at 243–542 (DHRKIGKELE…LIEHTAGKFP (300 aa)) is catalytic. Residues cysteine 338, histidine 389, and histidine 519 each coordinate Zn(2+).

It belongs to the class-II aminoacyl-tRNA synthetase family. In terms of assembly, homodimer. Zn(2+) serves as cofactor.

Its subcellular location is the cytoplasm. It carries out the reaction tRNA(Thr) + L-threonine + ATP = L-threonyl-tRNA(Thr) + AMP + diphosphate + H(+). Catalyzes the attachment of threonine to tRNA(Thr) in a two-step reaction: L-threonine is first activated by ATP to form Thr-AMP and then transferred to the acceptor end of tRNA(Thr). Also edits incorrectly charged L-seryl-tRNA(Thr). This is Threonine--tRNA ligase from Porphyromonas gingivalis (strain ATCC 33277 / DSM 20709 / CIP 103683 / JCM 12257 / NCTC 11834 / 2561).